We begin with the raw amino-acid sequence, 162 residues long: tRNA (cytidine(34)-2'-O)-methyltransferase (162 aa).

S-adenosyl-L-methionine contacts are provided by L83, G105, I127, and S135.

The protein belongs to the class IV-like SAM-binding methyltransferase superfamily. RNA methyltransferase TrmH family. TrmL subfamily. Homodimer.

The protein resides in the cytoplasm. The catalysed reaction is cytidine(34) in tRNA + S-adenosyl-L-methionine = 2'-O-methylcytidine(34) in tRNA + S-adenosyl-L-homocysteine + H(+). It catalyses the reaction 5-carboxymethylaminomethyluridine(34) in tRNA(Leu) + S-adenosyl-L-methionine = 5-carboxymethylaminomethyl-2'-O-methyluridine(34) in tRNA(Leu) + S-adenosyl-L-homocysteine + H(+). Its function is as follows. Methylates the ribose at the nucleotide 34 wobble position in the two leucyl isoacceptors tRNA(Leu)(CmAA) and tRNA(Leu)(cmnm5UmAA). Catalyzes the methyl transfer from S-adenosyl-L-methionine to the 2'-OH of the wobble nucleotide. In Photorhabdus asymbiotica subsp. asymbiotica (strain ATCC 43949 / 3105-77) (Xenorhabdus luminescens (strain 2)), this protein is tRNA (cytidine(34)-2'-O)-methyltransferase.